The following is a 399-amino-acid chain: Probable sugar efflux transporter (399 aa).

Helical transmembrane passes span 15–35, 50–70, 81–101, 103–123, 136–156, 168–188, 209–229, 246–266, 273–293, 301–321, 333–353, and 364–384; these read VVTL…PVGL, VGMM…PFML, LIGL…AWSF, VLVI…SITS, AQAL…GIPI, MTFL…VKLL, PALV…YTAY, FATV…ILFG, ASGL…LLLP, LMLL…GMQV, VAMS…ALVG, and SIGY…LMIF.

It belongs to the major facilitator superfamily. SotB (TC 2.A.1.2) family.

It localises to the cell inner membrane. Its function is as follows. Involved in the efflux of sugars. The physiological role may be the reduction of the intracellular concentration of toxic sugars or sugar metabolites. In Klebsiella pneumoniae (strain 342), this protein is Probable sugar efflux transporter.